Reading from the N-terminus, the 231-residue chain is 6-hydroxymethyl-7,8-dihydropterin pyrophosphokinase (231 aa).

The protein belongs to the archaeal 6-HMPDK family. Requires Mg(2+) as cofactor.

The catalysed reaction is 6-hydroxymethyl-7,8-dihydropterin + ATP = (7,8-dihydropterin-6-yl)methyl diphosphate + AMP + H(+). Functionally, catalyzes the transfer of diphosphate from ATP to 6-hydroxymethyl-7,8-dihydropterin (6-HMD), leading to 6-hydroxymethyl-7,8-dihydropterin diphosphate (6-HMDP). To a lesser extent, can also use CTP, UTP, and GTP as the nucleotide triphosphate substrate. The sequence is that of 6-hydroxymethyl-7,8-dihydropterin pyrophosphokinase from Pyrococcus furiosus (strain ATCC 43587 / DSM 3638 / JCM 8422 / Vc1).